A 1210-amino-acid polypeptide reads, in one-letter code: Disease resistance-like protein DSC2 (1210 aa).

One can recognise a TIR domain in the interval 59-223; the sequence is WTHQVFPSFR…KVAKDVSDVL (165 aa). The active site involves glutamate 134. Residues 241 to 511 form the NB-ARC domain; it reads ITRINSLLCL…CLFNGCQVNH (271 aa). LRR repeat units lie at residues 662–685, 686–709, 711–732, 756–780, 783–804, 805–828, 830–848, 849–873, and 940–970; these read AKFL…IQPL, KNLK…SNAT, LESL…IRGT, ATSL…LPGD, MRSL…PEIS, TNIQ…RLWS, LDKL…PPVP, DGIS…NLSQ, and LPEL…NLSQ.

Belongs to the disease resistance NB-LRR family. Interacts with DSC1.

It catalyses the reaction NAD(+) + H2O = ADP-D-ribose + nicotinamide + H(+). Functionally, TIR-NB-LRR receptor-like protein involved in plant defense. Acts as a trigger of hypersensitive response (HR). Functions as a guard of CAMTA3, a negative regulator of immunity, during pathogen infection. This Arabidopsis thaliana (Mouse-ear cress) protein is Disease resistance-like protein DSC2.